The chain runs to 547 residues: Carboxypeptidase N subunit 2 (547 aa).

An N-terminal signal peptide occupies residues Met1–Pro21. An LRRNT domain is found at Cys22–Pro49. 3 N-linked (GlcNAc...) asparagine glycosylation sites follow: Asn74, Asn111, and Asn119. 12 LRR repeats span residues Arg98–Asn119, Ser122–His143, Ile146–Ser167, Asp170–Ser191, Gly194–Ser215, Ser218–Gln239, Ser242–Ser263, Asn266–His287, Gly290–Asn311, Arg314–Asn335, Gln338–Asn359, and Arg362–Thr383. 2 N-linked (GlcNAc...) asparagine glycosylation sites follow: Asn266 and Asn311. Asn348, Asn359, and Asn367 each carry an N-linked (GlcNAc...) asparagine glycan. Residues Asn395–Val447 form the LRRCT domain. N-linked (GlcNAc...) asparagine glycosylation is present at Asn520.

Tetramer of two catalytic chains and two glycosylated inactive chains.

Its subcellular location is the secreted. The 83 kDa subunit binds and stabilizes the catalytic subunit at 37 degrees Celsius and keeps it in circulation. Under some circumstances it may be an allosteric modifier of the catalytic subunit. This chain is Carboxypeptidase N subunit 2 (Cpn2), found in Mus musculus (Mouse).